The following is a 117-amino-acid chain: NADH-ubiquinone oxidoreductase chain 3 (117 aa).

Transmembrane regions (helical) follow at residues 1–21 (MLSL…LLLV), 56–76 (FFLV…ILPY), and 86–106 (TFYN…GLMY).

This sequence belongs to the complex I subunit 3 family.

The protein localises to the mitochondrion membrane. It catalyses the reaction a ubiquinone + NADH + 5 H(+)(in) = a ubiquinol + NAD(+) + 4 H(+)(out). In terms of biological role, core subunit of the mitochondrial membrane respiratory chain NADH dehydrogenase (Complex I) that is believed to belong to the minimal assembly required for catalysis. Complex I functions in the transfer of electrons from NADH to the respiratory chain. The immediate electron acceptor for the enzyme is believed to be ubiquinone. The polypeptide is NADH-ubiquinone oxidoreductase chain 3 (ND3) (Branchiostoma lanceolatum (Common lancelet)).